The primary structure comprises 249 residues: Expansin-A19 (249 aa).

Residues 1–21 (MGNIFLQLLAVVALCIAPARS) form the signal peptide. Positions 41-154 (GGACGYGNLY…QQVKCWRYGG (114 aa)) constitute an Expansin-like EG45 domain. N-linked (GlcNAc...) asparagine glycosylation is found at Asn116 and Asn216. The region spanning 164–243 (YFELVLVTNM…GWSFGQTFST (80 aa)) is the Expansin-like CBD domain.

Belongs to the expansin family. Expansin A subfamily.

The protein localises to the secreted. It is found in the cell wall. It localises to the membrane. In terms of biological role, may cause loosening and extension of plant cell walls by disrupting non-covalent bonding between cellulose microfibrils and matrix glucans. No enzymatic activity has been found. May be required for rapid internodal elongation in deepwater rice during submergence. This Oryza sativa subsp. japonica (Rice) protein is Expansin-A19 (EXPA19).